The primary structure comprises 86 residues: Putative pro-MCH-like protein 2 (86 aa).

The tract at residues 31–49 (GSVAFPAENGVQDTESTLE) is NGE-like. The segment at 40–60 (GVQDTESTLEKRETGDEENSA) is disordered. The interval 52-64 (ETGDEENSAKFPI) is NEI-like. Residues 68-86 (DFDTLRCMLGRVYQRCWQV) are melanin-concentrating hormone-like.

Belongs to the melanin-concentrating hormone family. Expressed in testis but not in brain.

This is Putative pro-MCH-like protein 2 (PMCHL2) from Homo sapiens (Human).